Consider the following 359-residue polypeptide: Protein RecA (359 aa).

74–81 (GPESSGKT) provides a ligand contact to ATP.

Belongs to the RecA family.

It is found in the cytoplasm. Can catalyze the hydrolysis of ATP in the presence of single-stranded DNA, the ATP-dependent uptake of single-stranded DNA by duplex DNA, and the ATP-dependent hybridization of homologous single-stranded DNAs. It interacts with LexA causing its activation and leading to its autocatalytic cleavage. This Anaplasma marginale (strain St. Maries) protein is Protein RecA.